The following is a 251-amino-acid chain: Octanoyltransferase (251 aa).

Residues 49–230 enclose the BPL/LPL catalytic domain; sequence DEIADQILVL…DLDDAFAGRL (182 aa). Residues 87 to 94, 160 to 162, and 173 to 175 contribute to the substrate site; these read RGGRITWH, ALG, and GLA. C191 functions as the Acyl-thioester intermediate in the catalytic mechanism.

This sequence belongs to the LipB family.

The protein localises to the cytoplasm. It carries out the reaction octanoyl-[ACP] + L-lysyl-[protein] = N(6)-octanoyl-L-lysyl-[protein] + holo-[ACP] + H(+). It functions in the pathway protein modification; protein lipoylation via endogenous pathway; protein N(6)-(lipoyl)lysine from octanoyl-[acyl-carrier-protein]: step 1/2. In terms of biological role, catalyzes the transfer of endogenously produced octanoic acid from octanoyl-acyl-carrier-protein onto the lipoyl domains of lipoate-dependent enzymes. Lipoyl-ACP can also act as a substrate although octanoyl-ACP is likely to be the physiological substrate. This is Octanoyltransferase from Corynebacterium efficiens (strain DSM 44549 / YS-314 / AJ 12310 / JCM 11189 / NBRC 100395).